Consider the following 353-residue polypeptide: C-X-C chemokine receptor type 4 (353 aa).

Residues 1–22 form an important for chemokine binding and signaling region; the sequence is MEGIRIFTSDNYTEDDLGSGDY. Residues 1–39 are Extracellular-facing; it reads MEGIRIFTSDNYTEDDLGSGDYDSMKEPCFREENAHFNR. Asn11 is a glycosylation site (N-linked (GlcNAc...) asparagine). The residue at position 12 (Tyr12) is a Sulfotyrosine. Residue Ser19 is glycosylated (O-linked (Xyl...) (chondroitin sulfate) serine). Sulfotyrosine is present on Tyr22. 2 disulfides stabilise this stretch: Cys29/Cys275 and Cys110/Cys187. A helical membrane pass occupies residues 40-64; the sequence is IFLPTVYSIIFLTGIVGNGLVILVM. Topologically, residues 65–78 are cytoplasmic; sequence GYQKKLRSMTDKYR. Residues 79-100 form a helical membrane-spanning segment; that stretch reads LHLSVADLLFVLTLPFWAVDAV. Residues 95–98 are chemokine binding; sequence WAVD. Residues 101–111 are Extracellular-facing; that stretch reads ANWYFGKFLCK. The chain crosses the membrane as a helical span at residues 112–131; that stretch reads AVHVIYTVNLYSSVLILAFI. Residues 114–118 form a chemokine binding region; it reads HVIYT. Over 132-155 the chain is Cytoplasmic; it reads SLDRYLAIVHATNSQKPRKLLAEK. The short motif at 134 to 136 is the Important for signaling element; it reads DRY. Residues 136–148 are involved in dimerization; when bound to chemokine; the sequence is YLAIVHATNSQKP. A helical transmembrane segment spans residues 156-175; the sequence is VVYVGVWLPAVLLTIPDLIF. The Extracellular portion of the chain corresponds to 176–196; the sequence is ADIKEVDERYICDRFYPSDLW. The chemokine binding, important for signaling stretch occupies residues 187-191; the sequence is CDRFY. The segment at 192-211 is involved in dimerization; sequence PSDLWLVVFQFQHIVVGLLL. A helical membrane pass occupies residues 197-217; that stretch reads LVVFQFQHIVVGLLLPGIVIL. The Cytoplasmic segment spans residues 218-242; sequence SCYCIIISKLSHSKGYQKRKALKTT. The helical transmembrane segment at 243–262 threads the bilayer; sequence VILILTFFACWLPYYIGISI. Topologically, residues 263–283 are extracellular; that stretch reads DSFILLEIIQQGCEFESTVHK. An involved in dimerization region spans residues 267–269; the sequence is LLE. Residues 284 to 303 form a helical membrane-spanning segment; it reads WISITEALAFFHCCLNPILY. The Cytoplasmic portion of the chain corresponds to 304–353; sequence AFLGAKFKTSAQHALTSVSRGSSLKILSKGKRGGHSSVSTESESSSFHSS. Residues Ser320 and Ser322 each carry the phosphoserine modification. Ser325 and Ser326 each carry phosphoserine; by PKC and GRK6. A disordered region spans residues 330–353; the sequence is LSKGKRGGHSSVSTESESSSFHSS. Ser331 is modified (phosphoserine; by GRK6). Residue Lys332 forms a Glycyl lysine isopeptide (Lys-Gly) (interchain with G-Cter in ubiquitin) linkage. Residues 338-353 show a composition bias toward low complexity; sequence HSSVSTESESSSFHSS. Ser340 carries the phosphoserine; by GRK6 modification. Ser349 and Ser352 each carry phosphoserine.

The protein belongs to the G-protein coupled receptor 1 family. As to quaternary structure, monomer. Can form homodimers. Interacts with CD164. Interacts with ARRB2; the interaction is dependent on the C-terminal phosphorylation of CXCR4 and allows activation of MAPK1 and MAPK3. Interacts with ARR3; the interaction is dependent on the C-terminal phosphorylation of CXCR4 and modulates calcium mobilization. Interacts with RNF113A; the interaction, enhanced by CXCL12, promotes CXCR4 ubiquitination and subsequent degradation. Interacts (via the cytoplasmic C-terminal) with ITCH (via the WW domains I and II); the interaction, enhanced by CXCL12, promotes CXCR4 ubiquitination and leads to its degradation. Interacts with extracellular ubiquitin. Interacts with DBN1; this interaction is enhanced by antigenic stimulation. Following LPS binding, may form a complex with GDF5, HSP90AA1 and HSPA8. In terms of processing, phosphorylated on agonist stimulation. Rapidly phosphorylated on serine and threonine residues in the C-terminal. Phosphorylation at Ser-325 and Ser-326 leads to recruitment of ITCH, ubiquitination and protein degradation. Post-translationally, ubiquitinated after ligand binding, leading to its degradation. Ubiquitinated by ITCH at the cell membrane on agonist stimulation. The ubiquitin-dependent mechanism, endosomal sorting complex required for transport (ESCRT), then targets CXCR4 for lysosomal degradation. This process is dependent also on prior Ser-/Thr-phosphorylation in the C-terminal of CXCR4. Also binding of ARRB1 to STAM negatively regulates CXCR4 sorting to lysosomes though modulating ubiquitination of SFR5S. Sulfation is required for efficient binding of CXCL12/SDF-1alpha and promotes its dimerization. In terms of processing, O- and N-glycosylated. N-glycosylation can mask coreceptor function. The O-glycosylation chondroitin sulfate attachment does not affect interaction with CXCL12/SDF-1alpha nor its coreceptor activity. In terms of tissue distribution, brain, heart, kidney, lung and liver.

It localises to the cell membrane. The protein localises to the cell junction. The protein resides in the early endosome. It is found in the late endosome. Its subcellular location is the lysosome. Its function is as follows. Receptor for the C-X-C chemokine CXCL12/SDF-1 that transduces a signal by increasing intracellular calcium ion levels and enhancing MAPK1/MAPK3 activation. Involved in the AKT signaling cascade. Plays a role in regulation of cell migration, e.g. during wound healing. Acts as a receptor for extracellular ubiquitin; leading to enhanced intracellular calcium ions and reduced cellular cAMP levels. Binds bacterial lipopolysaccharide (LPS) et mediates LPS-induced inflammatory response, including TNF secretion by monocytes. Involved in hematopoiesis and in cardiac ventricular septum formation. Also plays an essential role in vascularization of the gastrointestinal tract, probably by regulating vascular branching and/or remodeling processes in endothelial cells. Involved in cerebellar development. In the CNS, could mediate hippocampal-neuron survival. The sequence is that of C-X-C chemokine receptor type 4 (CXCR4) from Bos taurus (Bovine).